The primary structure comprises 201 residues: Histidine biosynthesis bifunctional protein HisIE (201 aa).

Positions 1–111 (MKINWQKVDN…EKTTQPDWIF (111 aa)) are phosphoribosyl-AMP cyclohydrolase. Positions 112–201 (LSKLERLIAS…IHKLKERHTK (90 aa)) are phosphoribosyl-ATP pyrophosphohydrolase.

It in the N-terminal section; belongs to the PRA-CH family. This sequence in the C-terminal section; belongs to the PRA-PH family.

The protein localises to the cytoplasm. The catalysed reaction is 1-(5-phospho-beta-D-ribosyl)-ATP + H2O = 1-(5-phospho-beta-D-ribosyl)-5'-AMP + diphosphate + H(+). The enzyme catalyses 1-(5-phospho-beta-D-ribosyl)-5'-AMP + H2O = 1-(5-phospho-beta-D-ribosyl)-5-[(5-phospho-beta-D-ribosylamino)methylideneamino]imidazole-4-carboxamide. It participates in amino-acid biosynthesis; L-histidine biosynthesis; L-histidine from 5-phospho-alpha-D-ribose 1-diphosphate: step 2/9. The protein operates within amino-acid biosynthesis; L-histidine biosynthesis; L-histidine from 5-phospho-alpha-D-ribose 1-diphosphate: step 3/9. This chain is Histidine biosynthesis bifunctional protein HisIE (hisI), found in Pasteurella multocida (strain Pm70).